A 687-amino-acid chain; its full sequence is Glycine--tRNA ligase beta subunit (687 aa).

Belongs to the class-II aminoacyl-tRNA synthetase family. As to quaternary structure, tetramer of two alpha and two beta subunits.

The protein localises to the cytoplasm. The catalysed reaction is tRNA(Gly) + glycine + ATP = glycyl-tRNA(Gly) + AMP + diphosphate. This Geotalea daltonii (strain DSM 22248 / JCM 15807 / FRC-32) (Geobacter daltonii) protein is Glycine--tRNA ligase beta subunit.